Consider the following 72-residue polypeptide: Metallothionein-like protein 1B (72 aa).

It belongs to the metallothionein superfamily. Type 15 family. In terms of tissue distribution, expressed in leaves of mature plants.

In terms of biological role, metallothioneins have a high content of cysteine residues that bind various heavy metals. Functions as a metal chelator of nickel (Ni), cadmium (Cd), zinc (Zn) and copper (Cu). Possesses higher affinity for Ni and Cd ions compared to Zn and Cu ions. The polypeptide is Metallothionein-like protein 1B (MT1B) (Oryza sativa subsp. japonica (Rice)).